Consider the following 349-residue polypeptide: tRNA pseudouridine synthase D (349 aa).

F27 serves as a coordination point for substrate. The Nucleophile role is filled by D80. N129 is a binding site for substrate. In terms of domain architecture, TRUD spans 155-303; it reads GVPNYFGAQR…VEAARRAMLL (149 aa). Residue F329 coordinates substrate.

Belongs to the pseudouridine synthase TruD family.

It carries out the reaction uridine(13) in tRNA = pseudouridine(13) in tRNA. In terms of biological role, responsible for synthesis of pseudouridine from uracil-13 in transfer RNAs. The sequence is that of tRNA pseudouridine synthase D from Shigella boydii serotype 4 (strain Sb227).